Reading from the N-terminus, the 102-residue chain is Large ribosomal subunit protein bL28 (102 aa).

Residues 1 to 20 (MSRRCELTAKGPQVGHKVSH) form a disordered region.

It belongs to the bacterial ribosomal protein bL28 family.

The polypeptide is Large ribosomal subunit protein bL28 (Bradyrhizobium sp. (strain ORS 278)).